The following is a 191-amino-acid chain: dTTP/UTP pyrophosphatase (191 aa).

Asp69 (proton acceptor) is an active-site residue.

Belongs to the Maf family. YhdE subfamily. The cofactor is a divalent metal cation.

The protein resides in the cytoplasm. The enzyme catalyses dTTP + H2O = dTMP + diphosphate + H(+). It carries out the reaction UTP + H2O = UMP + diphosphate + H(+). Its function is as follows. Nucleoside triphosphate pyrophosphatase that hydrolyzes dTTP and UTP. May have a dual role in cell division arrest and in preventing the incorporation of modified nucleotides into cellular nucleic acids. In Pelotomaculum thermopropionicum (strain DSM 13744 / JCM 10971 / SI), this protein is dTTP/UTP pyrophosphatase.